The sequence spans 105 residues: Putative pterin-4-alpha-carbinolamine dehydratase (105 aa).

The protein belongs to the pterin-4-alpha-carbinolamine dehydratase family.

The catalysed reaction is (4aS,6R)-4a-hydroxy-L-erythro-5,6,7,8-tetrahydrobiopterin = (6R)-L-erythro-6,7-dihydrobiopterin + H2O. The polypeptide is Putative pterin-4-alpha-carbinolamine dehydratase (Sinorhizobium fredii (strain NBRC 101917 / NGR234)).